The sequence spans 129 residues: Large ribosomal subunit protein bL20 (129 aa).

The protein belongs to the bacterial ribosomal protein bL20 family.

Its function is as follows. Binds directly to 23S ribosomal RNA and is necessary for the in vitro assembly process of the 50S ribosomal subunit. It is not involved in the protein synthesizing functions of that subunit. In Mycobacteroides abscessus (strain ATCC 19977 / DSM 44196 / CCUG 20993 / CIP 104536 / JCM 13569 / NCTC 13031 / TMC 1543 / L948) (Mycobacterium abscessus), this protein is Large ribosomal subunit protein bL20.